Here is a 90-residue protein sequence, read N- to C-terminus: Exodeoxyribonuclease 7 small subunit (90 aa).

The interval 62-90 (QDGQANPMSSQGHTAGEYPDDEAEEAEEA) is disordered. The segment covering 64-74 (GQANPMSSQGH) has biased composition (polar residues). Acidic residues predominate over residues 79–90 (YPDDEAEEAEEA).

The protein belongs to the XseB family. In terms of assembly, heterooligomer composed of large and small subunits.

It localises to the cytoplasm. It carries out the reaction Exonucleolytic cleavage in either 5'- to 3'- or 3'- to 5'-direction to yield nucleoside 5'-phosphates.. Its function is as follows. Bidirectionally degrades single-stranded DNA into large acid-insoluble oligonucleotides, which are then degraded further into small acid-soluble oligonucleotides. The polypeptide is Exodeoxyribonuclease 7 small subunit (Desulfovibrio desulfuricans (strain ATCC 27774 / DSM 6949 / MB)).